The primary structure comprises 450 residues: Protein tweety homolog 1 (450 aa).

At 1–43 the chain is on the extracellular side; the sequence is MGAPPGYRPSAWVHLLHQLPRADFQLRPVPSAFAPQEREYQQA. Residues 44–64 traverse the membrane as a helical segment; the sequence is LLLVAALAGLGLGLSLIFIAV. Over 65–88 the chain is Cytoplasmic; it reads YLIRFCCCRPPEPPGAKSPPPGGG. The helical transmembrane segment at 89–109 threads the bilayer; sequence CVTWNCIAALLVGCAGIGVGF. Over 110 to 214 the chain is Extracellular; sequence YGNSETSDGV…DVSFVEEYRW (105 aa). A glycan (N-linked (GlcNAc...) asparagine) is linked at Asn-130. A helical membrane pass occupies residues 215–235; that stretch reads LAYVLLLLLELLVCLFTLLGL. Over 236–240 the chain is Cytoplasmic; sequence ARQSK. A helical membrane pass occupies residues 241 to 261; the sequence is WLVIVMTVMSLLVLVLSWGSM. Residues 262-390 are Extracellular-facing; that stretch reads GLEAATAVGL…LRGLCEDTLE (129 aa). 2 cysteine pairs are disulfide-bonded: Cys-275-Cys-385 and Cys-303-Cys-370. N-linked (GlcNAc...) asparagine glycosylation is found at Asn-284 and Asn-355. Residues 391–411 traverse the membrane as a helical segment; the sequence is GLLFLLLFSLLSAGALATVLC. Topologically, residues 412–450 are cytoplasmic; sequence SLPRAWALFPPSDDYEDTDDDDPFNPQESKRFVQWQSSI. The disordered stretch occupies residues 427 to 450; the sequence is EDTDDDDPFNPQESKRFVQWQSSI. The residue at position 440 (Ser-440) is a Phosphoserine.

This sequence belongs to the tweety family. As to quaternary structure, homotetramer; disulfide-linked. Homodimer. N-glycosylated. Contains high-mannose, hybrid and complex oligosaccharides.

It localises to the cell membrane. The enzyme catalyses chloride(in) = chloride(out). The catalysed reaction is L-glutamate(out) = L-glutamate(in). In terms of biological role, calcium-independent, swelling-dependent volume-regulated anion channel (VRAC-swell) which plays a pivotal role in the process of regulatory volume decrease (RVD) in the brain through the efflux of anions like chloride and organic osmolytes like glutamate. The sequence is that of Protein tweety homolog 1 (TTYH1) from Bos taurus (Bovine).